We begin with the raw amino-acid sequence, 831 residues long: V-type proton ATPase 116 kDa subunit a1 (831 aa).

Residues 1–388 (MGELFRSEEM…DAYGIGSYRE (388 aa)) lie on the Cytoplasmic side of the membrane. The chain crosses the membrane as a helical span at residues 389–407 (INPAPYTIITFPFLFAVMF). The Vacuolar portion of the chain corresponds to 408–409 (GD). Residues 410–426 (FGHGILMTLFAVWMVVR) form a helical membrane-spanning segment. The Cytoplasmic portion of the chain corresponds to 427 to 441 (ESRILSQKIDNELFS). Residues 442–471 (MMFSGRYIILLMGLFSTYTGLIYNDCFSKA) traverse the membrane as a helical segment. Residues 472–534 (LNLFGSSWSV…ATNKLTFLNS (63 aa)) lie on the Vacuolar side of the membrane. Residues 535 to 554 (FKMKMSVILGIIHMIFGVAL) traverse the membrane as a helical segment. At 555-572 (SVLNHIYFKKPLNIYLSF) the chain is on the cytoplasmic side. The helical transmembrane segment at 573–593 (IPEMIFMTTLFGYLVILIIYK) threads the bilayer. The Vacuolar portion of the chain corresponds to 594–638 (WCAYDVSTSMVAPSLLIHFINMFLFSYQDTSLPMLYKGQMGLQCF). A helical transmembrane segment spans residues 639–658 (LVVCAIICVPWMLVLKPLIL). Residues 659–718 (RRQYLRRKHLGTHNFGGIRVGNGPTEEDAEIIQHDQLSMHSDEEEEFDFGDTVVHQAIHT) are Cytoplasmic-facing. A helical membrane pass occupies residues 719–743 (IEYCLGCISNTASYLRLWALSLAHA). Over 744 to 764 (QLSEVLWTMVMHIGLNIRSLG) the chain is Vacuolar. A helical transmembrane segment spans residues 765-803 (GGIALVFIFSAFATLTIAILLIMEGLSAFLHALRLHWVE). The Cytoplasmic portion of the chain corresponds to 804 to 831 (FRNKFYMGTGFKFLPFSFETIWEGKFDD).

It belongs to the V-ATPase 116 kDa subunit family. As to quaternary structure, V-ATPase is a heteromultimeric enzyme made up of two complexes: the ATP-hydrolytic V1 complex and the proton translocation V0 complex. The V1 complex consists of three catalytic AB heterodimers that form a heterohexamer, three peripheral stalks each consisting of EG heterodimers, one central rotor including subunits D and F, and the regulatory subunits C and H. The proton translocation complex V0 consists of the proton transport subunit a, a ring of proteolipid subunits c9c'', rotary subunit d, subunits e and f, and two accessory subunits.

It localises to the cytoplasmic vesicle. The protein localises to the clathrin-coated vesicle membrane. The protein resides in the secretory vesicle. Its subcellular location is the synaptic vesicle membrane. It is found in the melanosome. In terms of biological role, subunit of the V0 complex of vacuolar(H+)-ATPase (V-ATPase), a multisubunit enzyme composed of a peripheral complex (V1) that hydrolyzes ATP and a membrane integral complex (V0) that translocates protons. V-ATPase is responsible for acidifying and maintaining the pH of intracellular compartments and in some cell types, is targeted to the plasma membrane, where it is responsible for acidifying the extracellular environment. Required for assembly and activity of the vacuolar ATPase. This chain is V-type proton ATPase 116 kDa subunit a1 (atp6v0a1), found in Xenopus laevis (African clawed frog).